A 101-amino-acid chain; its full sequence is Urease subunit beta (101 aa).

The protein belongs to the urease beta subunit family. As to quaternary structure, heterotrimer of UreA (gamma), UreB (beta) and UreC (alpha) subunits. Three heterotrimers associate to form the active enzyme.

It is found in the cytoplasm. The catalysed reaction is urea + 2 H2O + H(+) = hydrogencarbonate + 2 NH4(+). The protein operates within nitrogen metabolism; urea degradation; CO(2) and NH(3) from urea (urease route): step 1/1. The sequence is that of Urease subunit beta from Paraburkholderia xenovorans (strain LB400).